The primary structure comprises 366 residues: Glycine betaine monooxygenase reductase subunit (366 aa).

Positions N16–I119 constitute an FAD-binding FR-type domain. Positions H282–Y366 constitute a 2Fe-2S ferredoxin-type domain. Residues C316, C321, C324, and C354 each contribute to the [2Fe-2S] cluster site.

This sequence in the N-terminal section; belongs to the FAD-binding oxidoreductase type 6 family. The system is composed of an oxygenase subunit (GbcA) and a reductase subunit (GbcB). The cofactor is FAD. Requires [2Fe-2S] cluster as cofactor.

It catalyses the reaction glycine betaine + NADH + O2 + H(+) = N,N-dimethylglycine + formaldehyde + NAD(+) + H2O. Its function is as follows. Involved in degradation of glycine betaine. Part of a Rieske-type oxygenase system that catalyzes the conversion of glycine betaine (GB) to dimethylglycine (DMG). This subunit is the ferredoxin reductase component of the system. Required for growth on choline and GB, but not for growth on DMG. The chain is Glycine betaine monooxygenase reductase subunit from Pseudomonas aeruginosa (strain ATCC 15692 / DSM 22644 / CIP 104116 / JCM 14847 / LMG 12228 / 1C / PRS 101 / PAO1).